The sequence spans 363 residues: Heat-inducible transcription repressor HrcA (363 aa).

This sequence belongs to the HrcA family.

Negative regulator of class I heat shock genes (grpE-dnaK-dnaJ and groELS operons). Prevents heat-shock induction of these operons. In Rhizobium radiobacter (Agrobacterium tumefaciens), this protein is Heat-inducible transcription repressor HrcA.